A 204-amino-acid polypeptide reads, in one-letter code: Nascent polypeptide-associated complex subunit alpha-like protein 3 (204 aa).

Residues 1-23 (MTAEQKVELAAKLEEQKIDLDKP) are compositionally biased toward basic and acidic residues. 2 disordered regions span residues 1–68 (MTAE…AMLK) and 141–165 (GETS…EEGV). Residues 24–43 (EVEDDDDNDEDDSEDDDEAE) show a composition bias toward acidic residues. Ser-36 is modified (phosphoserine). Residues 44–59 (GHDGEAGGRSKQSRSE) show a composition bias toward basic and acidic residues. One can recognise an NAC-A/B domain in the interval 56 to 121 (SRSEKKSRKA…AKIEDLSSQL (66 aa)). The segment covering 141–152 (GETSSAATAAAV) has biased composition (low complexity). Residues 153 to 164 (QDDDDEEVDEEG) are compositionally biased toward acidic residues. Residues 159–204 (EVDEEGVEPKDIELVMTQAGVSKPRAVKALKLANGDIVSAIMELTT) form the UBA domain.

The protein belongs to the NAC-alpha family.

May promote appropriate targeting of ribosome-nascent polypeptide complexes. This is Nascent polypeptide-associated complex subunit alpha-like protein 3 from Arabidopsis thaliana (Mouse-ear cress).